A 372-amino-acid chain; its full sequence is tRNA-specific 2-thiouridylase MnmA (372 aa).

ATP contacts are provided by residues 6 to 13 (AMSGGVDS) and L32. Residue C101 is the Nucleophile of the active site. C101 and C193 are joined by a disulfide. G125 is an ATP binding site. An interaction with tRNA region spans residues 143–145 (KDQ). The active-site Cysteine persulfide intermediate is C193.

Belongs to the MnmA/TRMU family.

The protein localises to the cytoplasm. It catalyses the reaction S-sulfanyl-L-cysteinyl-[protein] + uridine(34) in tRNA + AH2 + ATP = 2-thiouridine(34) in tRNA + L-cysteinyl-[protein] + A + AMP + diphosphate + H(+). Its function is as follows. Catalyzes the 2-thiolation of uridine at the wobble position (U34) of tRNA, leading to the formation of s(2)U34. This is tRNA-specific 2-thiouridylase MnmA from Corynebacterium kroppenstedtii (strain DSM 44385 / JCM 11950 / CIP 105744 / CCUG 35717).